The primary structure comprises 106 residues: ATP-dependent Clp protease adapter protein ClpS (106 aa).

It belongs to the ClpS family. Binds to the N-terminal domain of the chaperone ClpA.

Its function is as follows. Involved in the modulation of the specificity of the ClpAP-mediated ATP-dependent protein degradation. The sequence is that of ATP-dependent Clp protease adapter protein ClpS from Pseudoalteromonas atlantica (strain T6c / ATCC BAA-1087).